The sequence spans 100 residues: Urease subunit gamma (100 aa).

This sequence belongs to the urease gamma subunit family. Heterotrimer of UreA (gamma), UreB (beta) and UreC (alpha) subunits. Three heterotrimers associate to form the active enzyme.

The protein localises to the cytoplasm. The enzyme catalyses urea + 2 H2O + H(+) = hydrogencarbonate + 2 NH4(+). It functions in the pathway nitrogen metabolism; urea degradation; CO(2) and NH(3) from urea (urease route): step 1/1. The chain is Urease subunit gamma from Aliivibrio fischeri (strain ATCC 700601 / ES114) (Vibrio fischeri).